Consider the following 167-residue polypeptide: Phosphopantetheine adenylyltransferase (167 aa).

T13 is a binding site for substrate. Residues 13 to 14 (TF) and H21 each bind ATP. Substrate-binding residues include K45, L78, and R92. ATP-binding positions include 93 to 95 (GLR), E103, and 128 to 134 (TQFISSS).

It belongs to the bacterial CoaD family. As to quaternary structure, homohexamer. Mg(2+) is required as a cofactor.

It localises to the cytoplasm. It carries out the reaction (R)-4'-phosphopantetheine + ATP + H(+) = 3'-dephospho-CoA + diphosphate. It participates in cofactor biosynthesis; coenzyme A biosynthesis; CoA from (R)-pantothenate: step 4/5. Functionally, reversibly transfers an adenylyl group from ATP to 4'-phosphopantetheine, yielding dephospho-CoA (dPCoA) and pyrophosphate. In Wolbachia sp. subsp. Brugia malayi (strain TRS), this protein is Phosphopantetheine adenylyltransferase.